The sequence spans 50 residues: Cytochrome c-555 (50 aa).

Positions 7, 10, 11, and 25 each coordinate heme.

Post-translationally, binds 1 heme group per subunit.

The protein localises to the cell membrane. This chain is Cytochrome c-555, found in Schinkia azotoformans (Bacillus azotoformans).